A 487-amino-acid chain; its full sequence is Glutamate--tRNA ligase (487 aa).

The 'HIGH' region signature appears at 13 to 23 (PSPTGLFHIGG). Positions 255 to 259 (KLSKR) match the 'KMSKS' region motif. Lys-258 contributes to the ATP binding site.

This sequence belongs to the class-I aminoacyl-tRNA synthetase family. Glutamate--tRNA ligase type 1 subfamily. As to quaternary structure, monomer.

The protein localises to the cytoplasm. It carries out the reaction tRNA(Glu) + L-glutamate + ATP = L-glutamyl-tRNA(Glu) + AMP + diphosphate. In terms of biological role, catalyzes the attachment of glutamate to tRNA(Glu) in a two-step reaction: glutamate is first activated by ATP to form Glu-AMP and then transferred to the acceptor end of tRNA(Glu). The chain is Glutamate--tRNA ligase from Malacoplasma penetrans (strain HF-2) (Mycoplasma penetrans).